Consider the following 765-residue polypeptide: Endosialin (765 aa).

The N-terminal stretch at 1 to 17 (MLLRLLLAWVAAVPALG) is a signal peptide. Over 18 to 695 (QVPWTPEPRA…GQSQRDDRWL (678 aa)) the chain is Extracellular. In terms of domain architecture, C-type lectin spans 30-156 (GPSSCYALFP…CTLAVDGYLC (127 aa)). 6 disulfides stabilise this stretch: Cys131/Cys147, Cys164/Cys213, Cys203/Cys230, Cys316/Cys326, Cys322/Cys335, and Cys337/Cys350. Positions 162 to 232 (GACPALPLEV…WSQTGPLCPG (71 aa)) constitute a Sushi domain. Residues 312–351 (DTDECQIAGVCQQMCVNYVGGFECYCSEGHELEADGISCS) enclose the EGF-like; calcium-binding domain. Residues Thr401, Thr428, Thr448, Thr456, Thr459, and Thr466 are each glycosylated (O-linked (GalNAc...) threonine). O-linked (GalNAc...) serine glycans are attached at residues Ser467 and Ser470. A glycan (O-linked (GalNAc...) threonine) is linked at Thr472. O-linked (GalNAc...) serine glycosylation is present at Ser477. 11 O-linked (GalNAc...) threonine glycosylation sites follow: Thr488, Thr517, Thr520, Thr535, Thr552, Thr554, Thr556, Thr570, Thr571, Thr604, and Thr613. A disordered region spans residues 548–675 (MSPDTHTITY…QLPSVPSTAA (128 aa)). Pro residues predominate over residues 622–633 (PAFPSSPLPPQR). O-linked (GalNAc...) serine glycans are attached at residues Ser626 and Ser627. Residues Thr635 and Thr638 are each glycosylated (O-linked (GalNAc...) threonine). Residues 635–647 (TNQTSSISPTHSY) are compositionally biased toward polar residues. Ser639 and Ser640 each carry an O-linked (GalNAc...) serine glycan. Residue Thr644 is glycosylated (O-linked (GalNAc...) threonine). Ser663 carries O-linked (GalNAc...) serine glycosylation. O-linked (GalNAc...) threonine glycosylation occurs at Thr673. The chain crosses the membrane as a helical span at residues 696-716 (LVALLVPTCVFLVVLLALGIV). Topologically, residues 717–765 (YCTRCGSHAPNKRITDCYRWVTHAGNKSSTEPMPPRGSLTGVQTCRTSV) are cytoplasmic. Ser754 bears the Phosphoserine mark.

Interacts with PDGFRA; this interaction promotes PDGF receptor signaling pathway. Interacts with integrin beta-1/ITGB1. Interacts with insulin receptor/INSR; this interaction diminishes INSR autophosphorylation. Post-translationally, O-glycosylated by sialylated oligosaccharides. May be N-glycosylated. As to expression, expressed in cell lines derived from endothelial cells, embryonic fibroblasts and preadipocytes. Expressed in skeletal muscle by a subset of pericytes.

The protein localises to the membrane. Cell surface glycoprotein involved in various biological processes including angiogenesis, immune response modulation, and tissue remodeling and repair. Participates in pericyte proliferation through positive modulation of the PDGF receptor signaling pathway. Acts as a scaffold for factor X, triggering allosteric changes and the spatial re-alignment of factor X with the TF-factor VIIa complex, thereby enhancing coagulation activation. Modulates the insulin signaling pathway by interacting with insulin receptor/INSR and by diminishing its capacity to be autophosphorylated in response to insulin. Also regulates LPS-induced inflammatory responses in macrophages by favoring production of proinflammatory cytokines. This Mus musculus (Mouse) protein is Endosialin (Cd248).